The following is a 392-amino-acid chain: Extracellular metalloproteinase 4 (392 aa).

Residues 1 to 9 constitute a propeptide that is removed on maturation; sequence VHSVVDYVS. N176 carries an N-linked (GlcNAc...) asparagine glycan. H193 contributes to the Zn(2+) binding site. E194 is a catalytic residue. A Zn(2+)-binding site is contributed by H197. Residues N359 and N385 are each glycosylated (N-linked (GlcNAc...) asparagine).

This sequence belongs to the peptidase M36 family. Requires Zn(2+) as cofactor.

The protein resides in the secreted. Functionally, secreted metalloproteinase probably acting as a virulence factor. The polypeptide is Extracellular metalloproteinase 4 (MEP4) (Trichophyton soudanense).